The chain runs to 65 residues: Kappa-scoloptoxin(04)-Ssd1a (65 aa).

The signal sequence occupies residues Met1 to Gly24. Positions Glu25 to Arg36 are excised as a propeptide. 2 cysteine pairs are disulfide-bonded: Cys42-Cys53 and Cys47-Cys60.

In terms of tissue distribution, expressed by the venom gland.

It is found in the secreted. Functionally, voltage-gated potassium channel inhibitor. The polypeptide is Kappa-scoloptoxin(04)-Ssd1a (Scolopendra dehaani (Thai centipede)).